We begin with the raw amino-acid sequence, 86 residues long: UPF0297 protein LSL_1110 (86 aa).

It belongs to the UPF0297 family.

The protein is UPF0297 protein LSL_1110 of Ligilactobacillus salivarius (strain UCC118) (Lactobacillus salivarius).